The chain runs to 207 residues: Segregation and condensation protein B (207 aa).

The protein belongs to the ScpB family. Homodimer. Homodimerization may be required to stabilize the binding of ScpA to the Smc head domains. Component of a cohesin-like complex composed of ScpA, ScpB and the Smc homodimer, in which ScpA and ScpB bind to the head domain of Smc. The presence of the three proteins is required for the association of the complex with DNA.

It is found in the cytoplasm. Functionally, participates in chromosomal partition during cell division. May act via the formation of a condensin-like complex containing Smc and ScpA that pull DNA away from mid-cell into both cell halves. The sequence is that of Segregation and condensation protein B from Mycoplasma genitalium (strain ATCC 33530 / DSM 19775 / NCTC 10195 / G37) (Mycoplasmoides genitalium).